The primary structure comprises 1220 residues: DNA polymerase catalytic subunit (1220 aa).

The protein belongs to the DNA polymerase type-B family. Forms a complex with the ssDNA-binding protein, the DNA polymerase processivity factor, and the alkaline exonuclease. Interacts with the helicase-primase complex composed of the primase, the helicase and the primase-associated factor; this interaction may coordinate leading and lagging strand DNA synthesis at the replication fork.

It localises to the host nucleus. The enzyme catalyses DNA(n) + a 2'-deoxyribonucleoside 5'-triphosphate = DNA(n+1) + diphosphate. It carries out the reaction Endonucleolytic cleavage to 5'-phosphomonoester.. Its function is as follows. Replicates viral genomic DNA. The replication complex is composed of six viral proteins: the DNA polymerase, processivity factor, primase, primase-associated factor, helicase, and ssDNA-binding protein. Additionally, the polymerase contains an intrinsic ribonuclease H (RNase H) activity that specifically degrades RNA/DNA heteroduplexes or duplex DNA substrates in the 5' to 3' direction. Therefore, it can catalyze the excision of the RNA primers that initiate the synthesis of Okazaki fragments at a replication fork during viral DNA replication. This chain is DNA polymerase catalytic subunit (MDV043), found in Gallid herpesvirus 2 (strain Chicken/Md5/ATCC VR-987) (GaHV-2).